Here is a 145-residue protein sequence, read N- to C-terminus: uncharacterized protein (145 aa).

The segment at M1 to S25 is disordered. Basic and acidic residues predominate over residues P14–S25.

This is an uncharacterized protein from His1 virus (isolate Australia/Victoria) (His1V).